The sequence spans 309 residues: MASEKSKILVVGGTGYLGRHVVAASARLGHPTSALVRDTAPSDPAKAALLKSFQDAGVTLLKGDLYDQASLVSAVKGADVVISVLGSMQIADQSRLVDAIKEAGNVKRFFPSEFGLDVDRTGIVEPAKSILGAKVGIRRATEAAGIPYTYAVAGFFAGFGLPKVGQVLAPGPPADKAVVLGDGDTKAVFVEEGDIATYTVLAADDPRAENKVLYIKPPANTLSHNELLSLWEKKTGKTFRREYVPEEAVLKQIQESPIPLNIILAIGHAAFVRGEQTGFEIDPAKGVDASELYPDVKYTTVDEYLNRFL.

NADP(+)-binding positions include 12 to 18 (GGTGYLG), R37, and K46. The Proton acceptor role is filled by K134. Residue R138 coordinates NADP(+).

The protein belongs to the NmrA-type oxidoreductase family. Isoflavone reductase subfamily. As to quaternary structure, monomer.

It localises to the cytoplasm. It functions in the pathway alkaloid biosynthesis. Functionally, reductase that may be involved in a late step of alkaloid biosynthesis. The chain is Isoflavone reductase homolog IRL from Zea mays (Maize).